Reading from the N-terminus, the 205-residue chain is Glycerol-3-phosphate acyltransferase (205 aa).

Residues 1–3 (MSA) are Periplasmic-facing. Residues 4 to 24 (IAPGMILFAYLCGSISSAILV) traverse the membrane as a helical segment. At 25–52 (CRIAGLPDPRESGSGNPGATNVLRIGGK) the chain is on the cytoplasmic side. Residues 53–73 (GAAVAVLIFDILKGMLPVWGA) traverse the membrane as a helical segment. The Periplasmic segment spans residues 74–80 (YALGITP). A helical transmembrane segment spans residues 81 to 101 (FWLGLIAIAACLGHIWPVFFG). The Cytoplasmic segment spans residues 102–111 (FKGGKGVATA). Residues 112 to 132 (FGAIAPIGWDLTGVIAGTWLL) form a helical membrane-spanning segment. Over 133–137 (TVLLS) the chain is Periplasmic. A helical transmembrane segment spans residues 138-158 (GYSSLGAIVSALIAPFYVWWF). The Cytoplasmic portion of the chain corresponds to 159-205 (KPQFTFPVSMLSCLILLRHHDNIQRLWRRQETKIWTKLKKKREKESK).

Belongs to the PlsY family. Probably interacts with PlsX.

Its subcellular location is the cell inner membrane. The enzyme catalyses sn-glycerol 3-phosphate + an acyl-CoA = a 1-acyl-sn-glycero-3-phosphate + CoA. It catalyses the reaction a fatty acyl-[ACP] + sn-glycerol 3-phosphate = a 1-acyl-sn-glycero-3-phosphate + holo-[ACP]. The protein operates within lipid metabolism; phospholipid metabolism. In terms of biological role, catalyzes the transfer of an acyl group from acyl-ACP to glycerol-3-phosphate (G3P) to form lysophosphatidic acid (LPA). This enzyme can also utilize acyl-CoA as fatty acyl donor, but not acyl-PO(4). This chain is Glycerol-3-phosphate acyltransferase, found in Salmonella arizonae (strain ATCC BAA-731 / CDC346-86 / RSK2980).